The chain runs to 138 residues: Putative pre-16S rRNA nuclease (138 aa).

This sequence belongs to the YqgF nuclease family.

Its subcellular location is the cytoplasm. Could be a nuclease involved in processing of the 5'-end of pre-16S rRNA. The protein is Putative pre-16S rRNA nuclease of Listeria monocytogenes serovar 1/2a (strain ATCC BAA-679 / EGD-e).